The following is an 89-amino-acid chain: Small ribosomal subunit protein uS15 (89 aa).

A compositionally biased stretch (basic and acidic residues) spans 1 to 18 (MSLDTAEKQKLIENHQVH). The disordered stretch occupies residues 1 to 23 (MSLDTAEKQKLIENHQVHPTDTG).

It belongs to the universal ribosomal protein uS15 family. As to quaternary structure, part of the 30S ribosomal subunit. Forms a bridge to the 50S subunit in the 70S ribosome, contacting the 23S rRNA.

Its function is as follows. One of the primary rRNA binding proteins, it binds directly to 16S rRNA where it helps nucleate assembly of the platform of the 30S subunit by binding and bridging several RNA helices of the 16S rRNA. Functionally, forms an intersubunit bridge (bridge B4) with the 23S rRNA of the 50S subunit in the ribosome. This is Small ribosomal subunit protein uS15 from Prochlorococcus marinus (strain MIT 9301).